Here is a 126-residue protein sequence, read N- to C-terminus: Small ribosomal subunit protein uS13 (126 aa).

Residues 92 to 126 (HRRGLPVRGQRTKTNARTRKGPKKTVAGKKKATRK) form a disordered region.

Belongs to the universal ribosomal protein uS13 family. In terms of assembly, part of the 30S ribosomal subunit. Forms a loose heterodimer with protein S19. Forms two bridges to the 50S subunit in the 70S ribosome.

Its function is as follows. Located at the top of the head of the 30S subunit, it contacts several helices of the 16S rRNA. In the 70S ribosome it contacts the 23S rRNA (bridge B1a) and protein L5 of the 50S subunit (bridge B1b), connecting the 2 subunits; these bridges are implicated in subunit movement. Contacts the tRNAs in the A and P-sites. This is Small ribosomal subunit protein uS13 from Deinococcus radiodurans (strain ATCC 13939 / DSM 20539 / JCM 16871 / CCUG 27074 / LMG 4051 / NBRC 15346 / NCIMB 9279 / VKM B-1422 / R1).